The primary structure comprises 173 residues: Adenine phosphoribosyltransferase (173 aa).

This sequence belongs to the purine/pyrimidine phosphoribosyltransferase family. As to quaternary structure, homodimer.

The protein resides in the cytoplasm. It catalyses the reaction AMP + diphosphate = 5-phospho-alpha-D-ribose 1-diphosphate + adenine. The protein operates within purine metabolism; AMP biosynthesis via salvage pathway; AMP from adenine: step 1/1. In terms of biological role, catalyzes a salvage reaction resulting in the formation of AMP, that is energically less costly than de novo synthesis. The chain is Adenine phosphoribosyltransferase from Ureaplasma parvum serovar 3 (strain ATCC 27815 / 27 / NCTC 11736).